The following is a 279-amino-acid chain: Undecaprenyl-diphosphatase (279 aa).

Helical transmembrane passes span 1 to 21, 39 to 59, 96 to 116, 128 to 148, 155 to 175, 201 to 221, 231 to 251, and 259 to 279; these read MVLE…LPIS, GRFF…LYFF, LLLV…VRFV, FTMG…DALF, IFQI…FAII, FSFL…LVAG, YSLI…SALL, and FVLF…VSFF.

Belongs to the UppP family.

It localises to the cell membrane. The catalysed reaction is di-trans,octa-cis-undecaprenyl diphosphate + H2O = di-trans,octa-cis-undecaprenyl phosphate + phosphate + H(+). Functionally, catalyzes the dephosphorylation of undecaprenyl diphosphate (UPP). Confers resistance to bacitracin. The polypeptide is Undecaprenyl-diphosphatase (Tropheryma whipplei (strain TW08/27) (Whipple's bacillus)).